We begin with the raw amino-acid sequence, 346 residues long: Inositol 2-dehydrogenase (346 aa).

The protein belongs to the Gfo/Idh/MocA family. In terms of assembly, homotetramer.

The enzyme catalyses myo-inositol + NAD(+) = scyllo-inosose + NADH + H(+). Its function is as follows. Involved in the oxidation of myo-inositol (MI) to 2-keto-myo-inositol (2KMI or 2-inosose). The protein is Inositol 2-dehydrogenase of Rhodococcus erythropolis (strain PR4 / NBRC 100887).